Reading from the N-terminus, the 98-residue chain is Large ribosomal subunit protein bL21 (98 aa).

The protein belongs to the bacterial ribosomal protein bL21 family. As to quaternary structure, part of the 50S ribosomal subunit. Contacts protein L20.

This protein binds to 23S rRNA in the presence of protein L20. This is Large ribosomal subunit protein bL21 from Novosphingobium aromaticivorans (strain ATCC 700278 / DSM 12444 / CCUG 56034 / CIP 105152 / NBRC 16084 / F199).